The following is a 1333-amino-acid chain: MLDVNVFDELRIGLATADDIRRWSKGEVKKPETINYRTLKPEKDGLFCERIFGPTRDWECACGKYKRVRYKGIICERCGVEVTKSKVRRERMGHIELAAPVTHIWYFKGVPSRLGYLLDLAPKDLDLIIYFGANIITSVDEEARHSDQTTLEAEMLLEKKDVEADAESDIAERAEKLEEDLAELEAAGAKADARRKVQAAADKEMQHIRERAQREIDRLDEVWQTFIKLAPKQMIRDEKLYDELIDRYEDYFTGGMGAESIEALIQNFDLDAEAEELRDIINNGKGQKKMRALKRLKVVAAFQRSGNDPAGMVLNAIPVIPPELRPMVQLDGGRFATSDLNDLYRRVINRNNRLKRMIELGAPEIIVNNEKRMLQESVDALFDNGRRGRPVTGPGNRPLKSLSDLLKGKQGRFRQNLLGKRVDYSGRSVIIVGPQLRLHECGLPKLMALELFKPFVMKRLVENEYAQNIKSAKRMVERQRPEVWDVLEEAISEHPVMLNRAPTLHRLGIQAFEPVLVEGKAIQLHPLACEAFNADFDGDQMAVHLPLSAEAQAEARVLMLASNNILSPASGKPLAMPRLDMVTGLYYLTLEKSSEEFGGQGAYQPADENGPEKGVYSSLAEAIMAYDRGVLGLQAPVRIRLNHLRPPAEVEAEQFPDGWNQGETWLAHTTLGRVMFNEILPWNYPYLEGVMVRKGGGSDKIMLGDVVNDLAAKYPMITVAQTMDKMKDAGFYWSTRSGVTIAMSDVLVLPNKEEMLDRYEESARQIEVKYNRGKLTGRERYDRLVELWKDATDEVGQAVEDLYPDDNPIPMIVKSGAAGNMRQIWTLAGMKGMVVNSKGDYITRPIKTSFREGLTVLEYFNNSHGSRKGLADTALRTADSGYLTRRLVDVAQDVIVRVEDCGTRQGVRVPVAAEVLDATGAVTGYTRHDLIETSVSGRVLAGDATNAAGEVVLAAGTDLTELNIDLLVEAGIKDVKVRSVLTCQTPTGVCAKCYGKSMASGQQVDIGEAVGIVAAQSIGEPGTQLTMRTFHQGGVGGDITGGLPRVQELFEARVPKNCAPIASVEGVIHLEDEGNFYTLTIVPDDGSDNVVYEKLSKRQGLASTRVAMESNAGAFIERTLTEGDRVTVGQRLLRGAADPHDVLEILGRRGVEQHLIDEVQAVYRAQGVAIHDKHIEIIIRQMLRRGTVIESGSTEFLPGSLVDLSEAKLANSEAIGAGGQPAELRSEIMGITKASLATESWLSAASFQETTRVLTDAAINKRSDKLIGLKENVIIGKLIPAGTGISRYRNISIKPTEAARNAAYSIPTYGESIYGDDGFGEFTGASVPLDEAF.

C60, C62, C75, and C78 together coordinate Zn(2+). Residues D535, D537, and D539 each contribute to the Mg(2+) site. Positions 901, 983, 990, and 993 each coordinate Zn(2+).

This sequence belongs to the RNA polymerase beta' chain family. The RNAP catalytic core consists of 2 alpha, 1 beta, 1 beta' and 1 omega subunit. When a sigma factor is associated with the core the holoenzyme is formed, which can initiate transcription. Mg(2+) is required as a cofactor. Requires Zn(2+) as cofactor.

It catalyses the reaction RNA(n) + a ribonucleoside 5'-triphosphate = RNA(n+1) + diphosphate. Its function is as follows. DNA-dependent RNA polymerase catalyzes the transcription of DNA into RNA using the four ribonucleoside triphosphates as substrates. This is DNA-directed RNA polymerase subunit beta' from Corynebacterium glutamicum (strain ATCC 13032 / DSM 20300 / JCM 1318 / BCRC 11384 / CCUG 27702 / LMG 3730 / NBRC 12168 / NCIMB 10025 / NRRL B-2784 / 534).